The following is a 337-amino-acid chain: Eukaryotic translation initiation factor 3 subunit I (337 aa).

WD repeat units follow at residues 8 to 47 (GHER…RLGT), 50 to 91 (GHQG…KVWD), 147 to 186 (CTES…QLEN), 191 to 230 (EFDH…ILKT), and 288 to 327 (GHFG…FDFM).

It belongs to the eIF-3 subunit I family. Component of the eukaryotic translation initiation factor 3 (eIF-3) complex.

The protein localises to the cytoplasm. Component of the eukaryotic translation initiation factor 3 (eIF-3) complex, which is involved in protein synthesis of a specialized repertoire of mRNAs and, together with other initiation factors, stimulates binding of mRNA and methionyl-tRNAi to the 40S ribosome. The eIF-3 complex specifically targets and initiates translation of a subset of mRNAs involved in cell proliferation. The sequence is that of Eukaryotic translation initiation factor 3 subunit I (tif34) from Aspergillus niger (strain ATCC MYA-4892 / CBS 513.88 / FGSC A1513).